We begin with the raw amino-acid sequence, 135 residues long: Small ribosomal subunit protein uS17 (135 aa).

The disordered stretch occupies residues 1–59 (MAEAKTGAKAAPRVAKAAKAAPKKAAPNDAEAIGAANAANVKGPKHTPRTPKPRGRRKT). Residues 8 to 42 (AKAAPRVAKAAKAAPKKAAPNDAEAIGAANAANVK) show a composition bias toward low complexity. Residues 43–59 (GPKHTPRTPKPRGRRKT) show a composition bias toward basic residues.

Belongs to the universal ribosomal protein uS17 family. As to quaternary structure, part of the 30S ribosomal subunit.

Its function is as follows. One of the primary rRNA binding proteins, it binds specifically to the 5'-end of 16S ribosomal RNA. The chain is Small ribosomal subunit protein uS17 from Mycobacterium bovis (strain ATCC BAA-935 / AF2122/97).